A 552-amino-acid polypeptide reads, in one-letter code: Non-structural protein NS1 (552 aa).

This sequence belongs to the orbivirus non-structural protein NS1 family.

This Antilocapra americana (Pronghorn) protein is Non-structural protein NS1 (Segment-5).